A 213-amino-acid chain; its full sequence is Orotate phosphoribosyltransferase (213 aa).

Position 26 (Lys-26) interacts with 5-phospho-alpha-D-ribose 1-diphosphate. 34–35 (FF) is a binding site for orotate. Residues 72–73 (YK), Arg-98, Lys-99, Lys-102, and 123–131 (DDVISAGTS) contribute to the 5-phospho-alpha-D-ribose 1-diphosphate site. Ser-127 and Arg-155 together coordinate orotate.

It belongs to the purine/pyrimidine phosphoribosyltransferase family. PyrE subfamily. As to quaternary structure, homodimer. The cofactor is Mg(2+).

The catalysed reaction is orotidine 5'-phosphate + diphosphate = orotate + 5-phospho-alpha-D-ribose 1-diphosphate. It functions in the pathway pyrimidine metabolism; UMP biosynthesis via de novo pathway; UMP from orotate: step 1/2. Its function is as follows. Catalyzes the transfer of a ribosyl phosphate group from 5-phosphoribose 1-diphosphate to orotate, leading to the formation of orotidine monophosphate (OMP). In Neisseria gonorrhoeae (strain NCCP11945), this protein is Orotate phosphoribosyltransferase.